Reading from the N-terminus, the 61-residue chain is Photosystem II reaction center protein K (61 aa).

A propeptide spanning residues 1–24 is cleaved from the precursor; the sequence is MPNIFSLICICLNSALQPSGFFFA. A helical membrane pass occupies residues 36–56; the sequence is IVDFMPVIPVLFFLLAFVWQA.

It belongs to the PsbK family. PSII is composed of 1 copy each of membrane proteins PsbA, PsbB, PsbC, PsbD, PsbE, PsbF, PsbH, PsbI, PsbJ, PsbK, PsbL, PsbM, PsbT, PsbX, PsbY, PsbZ, Psb30/Ycf12, at least 3 peripheral proteins of the oxygen-evolving complex and a large number of cofactors. It forms dimeric complexes.

It is found in the plastid. It localises to the chloroplast thylakoid membrane. Its function is as follows. One of the components of the core complex of photosystem II (PSII). PSII is a light-driven water:plastoquinone oxidoreductase that uses light energy to abstract electrons from H(2)O, generating O(2) and a proton gradient subsequently used for ATP formation. It consists of a core antenna complex that captures photons, and an electron transfer chain that converts photonic excitation into a charge separation. The chain is Photosystem II reaction center protein K from Nymphaea alba (White water-lily).